The following is a 636-amino-acid chain: Nuclear receptor subfamily 2 group C member 1 (636 aa).

Residues 149–224 constitute a DNA-binding region (nuclear receptor); sequence VELCVVCGDK…LGMKQDSVQC (76 aa). NR C4-type zinc fingers lie at residues 152–172 and 188–207; these read CVVCGDKASGRHYGAVTCEGC and CRGSKDCVINKHYRNRCQYC. An NR LBD domain is found at 382–623; the sequence is ECVGSNSNLT…SIIPYILRME (242 aa).

The protein belongs to the nuclear hormone receptor family. NR2 subfamily.

The protein localises to the nucleus. Orphan nuclear receptor. Binds the IR7 element in the promoter of its own gene in an autoregulatory negative feedback mechanism. Primarily repressor of a broad range of genes. Binds to hormone response elements (HREs) consisting of two 5'-AGGTCA-3' half site direct repeat consensus sequences. The chain is Nuclear receptor subfamily 2 group C member 1 from Xenopus tropicalis (Western clawed frog).